Reading from the N-terminus, the 404-residue chain is L-cysteine:1D-myo-inositol 2-amino-2-deoxy-alpha-D-glucopyranoside ligase (404 aa).

A Zn(2+)-binding site is contributed by Cys47. Residues 47–50 (CGIT), Thr62, and 85–87 (NIT) each bind L-cysteinyl-5'-AMP. The 'HIGH' region signature appears at 49–59 (ITPYDSTHLGH). The short motif at 188–193 (ERGGDP) is the 'ERGGDP' region element. Trp228 contacts L-cysteinyl-5'-AMP. A Zn(2+)-binding site is contributed by Cys232. Position 250 to 252 (250 to 252 (GSD)) interacts with L-cysteinyl-5'-AMP. His257 contacts Zn(2+). Ile284 contributes to the L-cysteinyl-5'-AMP binding site. The 'KMSKS' region motif lies at 290–294 (KMSKS).

This sequence belongs to the class-I aminoacyl-tRNA synthetase family. MshC subfamily. Monomer. The cofactor is Zn(2+).

It carries out the reaction 1D-myo-inositol 2-amino-2-deoxy-alpha-D-glucopyranoside + L-cysteine + ATP = 1D-myo-inositol 2-(L-cysteinylamino)-2-deoxy-alpha-D-glucopyranoside + AMP + diphosphate + H(+). Functionally, catalyzes the ATP-dependent condensation of GlcN-Ins and L-cysteine to form L-Cys-GlcN-Ins. This chain is L-cysteine:1D-myo-inositol 2-amino-2-deoxy-alpha-D-glucopyranoside ligase, found in Corynebacterium striatum.